The sequence spans 484 residues: Allantoinase, mitochondrial (484 aa).

Residues His76, His78, Lys163, His199, His251, and Asp324 each coordinate Zn(2+). Lys163 carries the N6-carboxylysine modification.

Belongs to the metallo-dependent hydrolases superfamily. Allantoinase family. As to quaternary structure, homotetramer. Zn(2+) is required as a cofactor. Post-translationally, carboxylation allows a single lysine to coordinate two zinc ions. In terms of tissue distribution, liver and kidney.

Its subcellular location is the mitochondrion. It catalyses the reaction (S)-allantoin + H2O = allantoate + H(+). It participates in nitrogen metabolism; (S)-allantoin degradation; allantoate from (S)-allantoin: step 1/1. This is Allantoinase, mitochondrial (ALN) from Aquarana catesbeiana (American bullfrog).